The primary structure comprises 422 residues: Probable protein phosphatase 2C 43 (422 aa).

One can recognise a PPM-type phosphatase domain in the interval 117–393 (SSGSYADKGD…DNVTVVVICF (277 aa)). 4 residues coordinate Mn(2+): Asp-163, Gly-164, Asp-341, and Asp-384.

It belongs to the PP2C family. It depends on Mg(2+) as a cofactor. Mn(2+) is required as a cofactor.

It carries out the reaction O-phospho-L-seryl-[protein] + H2O = L-seryl-[protein] + phosphate. It catalyses the reaction O-phospho-L-threonyl-[protein] + H2O = L-threonyl-[protein] + phosphate. The sequence is that of Probable protein phosphatase 2C 43 from Arabidopsis thaliana (Mouse-ear cress).